We begin with the raw amino-acid sequence, 78 residues long: Beta-defensin 105A (78 aa).

Positions 1-27 (MALIRKTFYFLFAVFFVLVQLPSECQA) are cleaved as a signal peptide. 3 disulfides stabilise this stretch: Cys-43–Cys-74, Cys-53–Cys-67, and Cys-57–Cys-73.

It belongs to the beta-defensin family.

It localises to the secreted. Has antimicrobial activity. This chain is Beta-defensin 105A (DEFB105A), found in Pongo pygmaeus (Bornean orangutan).